The chain runs to 344 residues: Methionine import ATP-binding protein MetN (344 aa).

Residues 2-241 (IKLEKISKIF…PQTQLAKEFI (240 aa)) form the ABC transporter domain. 38 to 45 (GASGAGKS) lines the ATP pocket.

It belongs to the ABC transporter superfamily. Methionine importer (TC 3.A.1.24) family. The complex is composed of two ATP-binding proteins (MetN), two transmembrane proteins (MetI) and a solute-binding protein (MetQ).

It localises to the cell inner membrane. It catalyses the reaction L-methionine(out) + ATP + H2O = L-methionine(in) + ADP + phosphate + H(+). The catalysed reaction is D-methionine(out) + ATP + H2O = D-methionine(in) + ADP + phosphate + H(+). In terms of biological role, part of the ABC transporter complex MetNIQ involved in methionine import. Responsible for energy coupling to the transport system. The chain is Methionine import ATP-binding protein MetN from Pasteurella multocida (strain Pm70).